The primary structure comprises 61 residues: Small ribosomal subunit protein uS14 (61 aa).

Zn(2+) is bound by residues Cys-24, Cys-27, Cys-40, and Cys-43.

It belongs to the universal ribosomal protein uS14 family. Zinc-binding uS14 subfamily. Part of the 30S ribosomal subunit. Contacts proteins S3 and S10. It depends on Zn(2+) as a cofactor.

Functionally, binds 16S rRNA, required for the assembly of 30S particles and may also be responsible for determining the conformation of the 16S rRNA at the A site. In Helicobacter pylori (strain J99 / ATCC 700824) (Campylobacter pylori J99), this protein is Small ribosomal subunit protein uS14.